Reading from the N-terminus, the 80-residue chain is RNA-binding protein Hfq (80 aa).

Residues 10–70 form the Sm domain; sequence DIFLNQVRKE…ISTISPMKSV (61 aa).

This sequence belongs to the Hfq family. In terms of assembly, homohexamer.

Its function is as follows. RNA chaperone that binds small regulatory RNA (sRNAs) and mRNAs to facilitate mRNA translational regulation in response to envelope stress, environmental stress and changes in metabolite concentrations. Also binds with high specificity to tRNAs. This is RNA-binding protein Hfq from Ruminiclostridium cellulolyticum (strain ATCC 35319 / DSM 5812 / JCM 6584 / H10) (Clostridium cellulolyticum).